A 194-amino-acid polypeptide reads, in one-letter code: Probable thymidylate kinase (194 aa).

Residue 7–14 (GIDGSGKT) participates in ATP binding.

It belongs to the thymidylate kinase family.

It carries out the reaction dTMP + ATP = dTDP + ADP. This is Probable thymidylate kinase (tmk) from Methanothermobacter thermautotrophicus (strain ATCC 29096 / DSM 1053 / JCM 10044 / NBRC 100330 / Delta H) (Methanobacterium thermoautotrophicum).